The sequence spans 257 residues: Acetylglutamate kinase (257 aa).

Residues 43 to 44 (GG), R65, and N157 each bind substrate. Residues 180–185 (DISSIL) and 208–210 (IIT) each bind ATP.

Belongs to the acetylglutamate kinase family. ArgB subfamily. Homodimer.

The protein resides in the cytoplasm. It carries out the reaction N-acetyl-L-glutamate + ATP = N-acetyl-L-glutamyl 5-phosphate + ADP. It functions in the pathway amino-acid biosynthesis; L-arginine biosynthesis; N(2)-acetyl-L-ornithine from L-glutamate: step 2/4. In terms of biological role, catalyzes the ATP-dependent phosphorylation of N-acetyl-L-glutamate. The sequence is that of Acetylglutamate kinase from Buchnera aphidicola subsp. Acyrthosiphon pisum (strain Tuc7).